The sequence spans 192 residues: UPF0301 protein Jann_3896 (192 aa).

This sequence belongs to the UPF0301 (AlgH) family.

This is UPF0301 protein Jann_3896 from Jannaschia sp. (strain CCS1).